A 212-amino-acid chain; its full sequence is Pyrrolidone-carboxylate peptidase (212 aa).

Residues glutamate 80, cysteine 143, and histidine 165 contribute to the active site.

The protein belongs to the peptidase C15 family. In terms of assembly, homotetramer.

It is found in the cytoplasm. The enzyme catalyses Release of an N-terminal pyroglutamyl group from a polypeptide, the second amino acid generally not being Pro.. Removes 5-oxoproline from various penultimate amino acid residues except L-proline. This chain is Pyrrolidone-carboxylate peptidase, found in Vibrio campbellii (strain ATCC BAA-1116).